A 338-amino-acid polypeptide reads, in one-letter code: Anthranilate phosphoribosyltransferase (338 aa).

5-phospho-alpha-D-ribose 1-diphosphate contacts are provided by residues G81, 84–85 (GD), T89, 91–94 (NIST), 109–117 (KHGNRALSS), and A121. Position 81 (G81) interacts with anthranilate. S93 contacts Mg(2+). Residue N112 coordinates anthranilate. R167 provides a ligand contact to anthranilate. The Mg(2+) site is built by D225 and E226.

The protein belongs to the anthranilate phosphoribosyltransferase family. As to quaternary structure, homodimer. Requires Mg(2+) as cofactor.

The catalysed reaction is N-(5-phospho-beta-D-ribosyl)anthranilate + diphosphate = 5-phospho-alpha-D-ribose 1-diphosphate + anthranilate. It functions in the pathway amino-acid biosynthesis; L-tryptophan biosynthesis; L-tryptophan from chorismate: step 2/5. Catalyzes the transfer of the phosphoribosyl group of 5-phosphorylribose-1-pyrophosphate (PRPP) to anthranilate to yield N-(5'-phosphoribosyl)-anthranilate (PRA). The polypeptide is Anthranilate phosphoribosyltransferase (Rhizobium etli (strain CIAT 652)).